The sequence spans 149 residues: Calmodulin-like protein 3 (149 aa).

4 consecutive EF-hand domains span residues 8 to 43 (EQIAEFKEAFSLFDKDGDGSITTQELGTVMRSLGQN), 44 to 79 (PTEAELQGMVNEIDKDGNGTVDFPEFLTMMSRKMKD), 81 to 116 (DSEEEIREAFRVFDKDGNGFVSAAELRHVMTKLGEK), and 117 to 149 (LSDEEVDEMIQAADTDGDGQVNYEEFVHMLVSK). Asp-21, Asp-23, Asp-25, Ser-27, Glu-32, Asp-57, Asp-59, Asn-61, Thr-63, Glu-68, Asp-94, Asp-96, Asn-98, Glu-105, Asp-130, Asp-132, Asp-134, Gln-136, and Glu-141 together coordinate Ca(2+).

Belongs to the calmodulin family. Interacts with MYO10, the interaction is calcium-dependent and essential for MYO10 function in filopodial extension.

Its function is as follows. May function as a specific light chain of unconventional myosin-10 (MYO10), also enhances MYO10 translation, possibly by acting as a chaperone for the emerging MYO10 heavy chain protein. May compete with calmodulin by binding, with different affinities, to cellular substrates. The chain is Calmodulin-like protein 3 (Calml3) from Mus musculus (Mouse).